We begin with the raw amino-acid sequence, 352 residues long: uncharacterized protein (352 aa).

This is an uncharacterized protein from Frog virus 3 (isolate Goorha) (FV-3).